Reading from the N-terminus, the 494-residue chain is Casein kinase I homolog HRR25 (494 aa).

In terms of domain architecture, Protein kinase spans 9-278 (FRIGRKIGSG…LARLFKDLSI (270 aa)). ATP is bound by residues 15 to 23 (IGSGSFGDI) and Lys38. Residue Asp128 is the Proton acceptor of the active site. Residue Ser143 is modified to Phosphoserine. A disordered region spans residues 394-494 (RQQQPQQQVQ…DKPAGQSIWL (101 aa)). Composition is skewed to low complexity over residues 395–418 (QQQPQQQVQSSQPQPQPQQLQQQP) and 432–444 (QQQQRDSQEQQQQ). Positions 445–479 (VPMATTRATQYPPQINSNNFNTNQASVPPQMRSNP) are enriched in polar residues.

It belongs to the protein kinase superfamily. CK1 Ser/Thr protein kinase family. Casein kinase I subfamily. As to quaternary structure, interacts with HRI1. Interacts with ELP1/IKI3; the interaction leads to ELP1/IKI3 phosphorylation.

Its subcellular location is the cytoplasm. It is found in the nucleus. The protein localises to the nucleolus. It localises to the nucleoplasm. The enzyme catalyses L-seryl-[protein] + ATP = O-phospho-L-seryl-[protein] + ADP + H(+). The catalysed reaction is L-threonyl-[protein] + ATP = O-phospho-L-threonyl-[protein] + ADP + H(+). Its function is as follows. Protein kinase which phosphorylates serine and threonine residues. Can use casein as a substrate. Phosphorylates elongator complex member ELP1/IKI3 on 'Ser-1198' and 'Ser-1202' which promotes the tRNA modification function of the complex. Associated with repair of damaged DNA and meiosis. In Saccharomyces cerevisiae (strain ATCC 204508 / S288c) (Baker's yeast), this protein is Casein kinase I homolog HRR25 (HRR25).